The chain runs to 226 residues: ATP synthase F(0) complex subunit a (226 aa).

6 helical membrane passes run 6-26, 68-88, 97-117, 138-158, 164-184, and 195-215; these read FAPF…IITF, WTLM…LGLL, QLSM…IMGF, IPML…ALAV, ITAG…LSSI, and ILFL…YVFT.

The protein belongs to the ATPase A chain family. Component of the ATP synthase complex composed at least of ATP5F1A/subunit alpha, ATP5F1B/subunit beta, ATP5MC1/subunit c (homooctomer), MT-ATP6/subunit a, MT-ATP8/subunit 8, ATP5ME/subunit e, ATP5MF/subunit f, ATP5MG/subunit g, ATP5MK/subunit k, ATP5MJ/subunit j, ATP5F1C/subunit gamma, ATP5F1D/subunit delta, ATP5F1E/subunit epsilon, ATP5PF/subunit F6, ATP5PB/subunit b, ATP5PD/subunit d, ATP5PO/subunit OSCP. ATP synthase complex consists of a soluble F(1) head domain (subunits alpha(3) and beta(3)) - the catalytic core - and a membrane F(0) domain - the membrane proton channel (subunits c, a, 8, e, f, g, k and j). These two domains are linked by a central stalk (subunits gamma, delta, and epsilon) rotating inside the F1 region and a stationary peripheral stalk (subunits F6, b, d, and OSCP). Interacts with DNAJC30; interaction is direct.

The protein localises to the mitochondrion inner membrane. It catalyses the reaction H(+)(in) = H(+)(out). Its function is as follows. Subunit a, of the mitochondrial membrane ATP synthase complex (F(1)F(0) ATP synthase or Complex V) that produces ATP from ADP in the presence of a proton gradient across the membrane which is generated by electron transport complexes of the respiratory chain. ATP synthase complex consist of a soluble F(1) head domain - the catalytic core - and a membrane F(1) domain - the membrane proton channel. These two domains are linked by a central stalk rotating inside the F(1) region and a stationary peripheral stalk. During catalysis, ATP synthesis in the catalytic domain of F(1) is coupled via a rotary mechanism of the central stalk subunits to proton translocation. With the subunit c (ATP5MC1), forms the proton-conducting channel in the F(0) domain, that contains two crucial half-channels (inlet and outlet) that facilitate proton movement from the mitochondrial intermembrane space (IMS) into the matrix. Protons are taken up via the inlet half-channel and released through the outlet half-channel, following a Grotthuss mechanism. The sequence is that of ATP synthase F(0) complex subunit a from Didelphis virginiana (North American opossum).